A 737-amino-acid chain; its full sequence is MIVRNEPPITPELVASHGLKPDEYERILKLLGRTPTFTELGIFSAMWNEHCSYKSSRIHLRGLPTKAPWVIQGPGENAGVIDIGDGQAVVFKMESHNHPSYIEPYQGATTGVGGILRDVFTMGARPIACLNALSFGDPSHPKTRHLVSGVVAGVGGYGNSFGVPTVGGQVRFHTRYDGNILVNAMAVGLADADRIFYAAASGVNMPIVYLGSKTGRDGIHGATMASAEFDDDSEEKRPTVQVGDPFAEKLLLEACLEIMAKGCVVAIQDMGAAGLTCSAVEMGAKGDLGVDLDLDSVPTRETGMSAYEMMLSESQERMLMVLKPEKEKEAEAIFRKWGLDFAIVGSTTPGRRFVVRHGGDVMADLPIKELESEAPLYDRPHVPSPQLPVIQARDVAPSLTTADALEKLLAMPELCSKRWVWEQYDHVIGGNTVQRPGGDAAVVRVEDGPKGLALTVDVTPRYCEADPFEGGKQAVAEAWRNITAVGGRPLAITDNLNFGNPERPENMGQFVGCLKGIAAACTALDFPVVSGNVSLYNETNGRGILPTPTIGGVGLLDDFTKSASLAFKAEGHPILLIGDTQGWLGQSVYLRDICRREEGAPPPVDLAAEKRNGDVVRGMIHAGTATAVHDVSDGGLLVALAEMAMADGIGAALDAAPAAIVPYAWWFGEDQARYIVTVHERDLLSVFTKLKAVNVPCIQIGLTGGHEIAIAGERAVDLKVLRQGFESWLPDYMAGKP.

His50 is a catalytic residue. 2 residues coordinate ATP: Tyr53 and Lys92. Glu94 is a Mg(2+) binding site. Residues Ser95–His98 and Arg117 contribute to the substrate site. The active-site Proton acceptor is His96. Position 118 (Asp118) interacts with Mg(2+). Gln241 provides a ligand contact to substrate. Asp269 contributes to the Mg(2+) binding site. Glu313–Gln315 contributes to the substrate binding site. Asp494 and Gly531 together coordinate ATP. Position 532 (Asn532) interacts with Mg(2+). Residue Ser534 coordinates substrate.

This sequence belongs to the FGAMS family. Monomer. Part of the FGAM synthase complex composed of 1 PurL, 1 PurQ and 2 PurS subunits.

The protein localises to the cytoplasm. It catalyses the reaction N(2)-formyl-N(1)-(5-phospho-beta-D-ribosyl)glycinamide + L-glutamine + ATP + H2O = 2-formamido-N(1)-(5-O-phospho-beta-D-ribosyl)acetamidine + L-glutamate + ADP + phosphate + H(+). It functions in the pathway purine metabolism; IMP biosynthesis via de novo pathway; 5-amino-1-(5-phospho-D-ribosyl)imidazole from N(2)-formyl-N(1)-(5-phospho-D-ribosyl)glycinamide: step 1/2. Part of the phosphoribosylformylglycinamidine synthase complex involved in the purines biosynthetic pathway. Catalyzes the ATP-dependent conversion of formylglycinamide ribonucleotide (FGAR) and glutamine to yield formylglycinamidine ribonucleotide (FGAM) and glutamate. The FGAM synthase complex is composed of three subunits. PurQ produces an ammonia molecule by converting glutamine to glutamate. PurL transfers the ammonia molecule to FGAR to form FGAM in an ATP-dependent manner. PurS interacts with PurQ and PurL and is thought to assist in the transfer of the ammonia molecule from PurQ to PurL. The sequence is that of Phosphoribosylformylglycinamidine synthase subunit PurL from Nitrobacter winogradskyi (strain ATCC 25391 / DSM 10237 / CIP 104748 / NCIMB 11846 / Nb-255).